A 257-amino-acid chain; its full sequence is Imidazole glycerol phosphate synthase subunit HisF (257 aa).

Residues Asp11 and Asp130 contribute to the active site.

The protein belongs to the HisA/HisF family. In terms of assembly, heterodimer of HisH and HisF.

The protein resides in the cytoplasm. It carries out the reaction 5-[(5-phospho-1-deoxy-D-ribulos-1-ylimino)methylamino]-1-(5-phospho-beta-D-ribosyl)imidazole-4-carboxamide + L-glutamine = D-erythro-1-(imidazol-4-yl)glycerol 3-phosphate + 5-amino-1-(5-phospho-beta-D-ribosyl)imidazole-4-carboxamide + L-glutamate + H(+). Its pathway is amino-acid biosynthesis; L-histidine biosynthesis; L-histidine from 5-phospho-alpha-D-ribose 1-diphosphate: step 5/9. Its function is as follows. IGPS catalyzes the conversion of PRFAR and glutamine to IGP, AICAR and glutamate. The HisF subunit catalyzes the cyclization activity that produces IGP and AICAR from PRFAR using the ammonia provided by the HisH subunit. The polypeptide is Imidazole glycerol phosphate synthase subunit HisF (Shewanella baltica (strain OS223)).